Reading from the N-terminus, the 258-residue chain is Indole-3-glycerol phosphate synthase (258 aa).

Belongs to the TrpC family.

It carries out the reaction 1-(2-carboxyphenylamino)-1-deoxy-D-ribulose 5-phosphate + H(+) = (1S,2R)-1-C-(indol-3-yl)glycerol 3-phosphate + CO2 + H2O. It functions in the pathway amino-acid biosynthesis; L-tryptophan biosynthesis; L-tryptophan from chorismate: step 4/5. This chain is Indole-3-glycerol phosphate synthase, found in Geobacillus sp. (strain WCH70).